The sequence spans 132 residues: Fatty acid-binding protein 9 (132 aa).

Phosphoserine is present on residues Ser-13, Ser-14, Ser-40, Ser-42, Ser-44, and Ser-91.

Belongs to the calycin superfamily. Fatty-acid binding protein (FABP) family. As to expression, testis.

Its subcellular location is the cytoplasm. The chain is Fatty acid-binding protein 9 (Fabp9) from Mus musculus (Mouse).